A 250-amino-acid polypeptide reads, in one-letter code: Probable phosphatase VIBHAR_04983 (250 aa).

Residues histidine 8, histidine 10, histidine 16, histidine 41, glutamate 74, histidine 102, histidine 132, aspartate 194, and histidine 196 each contribute to the Zn(2+) site.

It belongs to the PHP family. Zn(2+) is required as a cofactor.

This chain is Probable phosphatase VIBHAR_04983, found in Vibrio campbellii (strain ATCC BAA-1116).